The chain runs to 256 residues: MLNIGPFSFHSRLLLGTGKFPDFDVQQKAIDVSEAEVLTFAVRRMDIFDAKQPNLLEKLDVKKYTLLPNTAGAKNAEEAVRIAKLAKASGLCDMIKVEVIGDDRTLLPDPVETLKASEMLLEEGFIVLPYTSDDVVLARKLQELGVHAIMPGASPIGSGLGIVNPLNLSFIIEQATVPVIVDAGVGSPADAAFAMELGADGVLLNTAVSGAKDPIKMAQAMKLSIEAGRLGFEAGRIARKRCATASSPLEGMSVVE.

Catalysis depends on Lys96, which acts as the Schiff-base intermediate with DXP. 1-deoxy-D-xylulose 5-phosphate contacts are provided by residues Gly157, 183–184 (AG), and 205–206 (NT).

It belongs to the ThiG family. As to quaternary structure, homotetramer. Forms heterodimers with either ThiH or ThiS.

The protein localises to the cytoplasm. It carries out the reaction [ThiS sulfur-carrier protein]-C-terminal-Gly-aminoethanethioate + 2-iminoacetate + 1-deoxy-D-xylulose 5-phosphate = [ThiS sulfur-carrier protein]-C-terminal Gly-Gly + 2-[(2R,5Z)-2-carboxy-4-methylthiazol-5(2H)-ylidene]ethyl phosphate + 2 H2O + H(+). Its pathway is cofactor biosynthesis; thiamine diphosphate biosynthesis. In terms of biological role, catalyzes the rearrangement of 1-deoxy-D-xylulose 5-phosphate (DXP) to produce the thiazole phosphate moiety of thiamine. Sulfur is provided by the thiocarboxylate moiety of the carrier protein ThiS. In vitro, sulfur can be provided by H(2)S. The polypeptide is Thiazole synthase (Bacillus cereus (strain 03BB102)).